Consider the following 235-residue polypeptide: Protein FAM3B (235 aa).

The N-terminal stretch at 1-29 (MRPLAGGLLKVVFVVFASLCAWYSGYLLA) is a signal peptide. 2 cysteine pairs are disulfide-bonded: Cys63-Cys91 and Cys69-Cys229. The GG-type lectin domain occupies 72–233 (DTYAYRLLSG…IQIEGCIPKE (162 aa)). N-linked (GlcNAc...) asparagine glycans are attached at residues Asn120 and Asn208.

This sequence belongs to the FAM3 family. 2 N-termini have been observed in the mature protein: the first at Glu-30, resulting from signal peptide cleavage, the second at Ser-46. Post-translationally, O-glycosylated. Highly expressed in the pancreas. Also found in the colon, kidney, prostate, small intestine and testis.

It is found in the secreted. Functionally, induces apoptosis of alpha and beta cells in a dose- and time-dependent manner. The protein is Protein FAM3B (FAM3B) of Homo sapiens (Human).